Here is a 527-residue protein sequence, read N- to C-terminus: Peptide chain release factor 3 (527 aa).

Residues 9–277 (AKRRTFAIIS…AVVNWAPKPL (269 aa)) enclose the tr-type G domain. Residues 18–25 (SHPDAGKT), 86–90 (DTPGH), and 140–143 (NKLD) each bind GTP.

Belongs to the TRAFAC class translation factor GTPase superfamily. Classic translation factor GTPase family. PrfC subfamily.

The protein localises to the cytoplasm. In terms of biological role, increases the formation of ribosomal termination complexes and stimulates activities of RF-1 and RF-2. It binds guanine nucleotides and has strong preference for UGA stop codons. It may interact directly with the ribosome. The stimulation of RF-1 and RF-2 is significantly reduced by GTP and GDP, but not by GMP. This Pseudomonas savastanoi pv. phaseolicola (strain 1448A / Race 6) (Pseudomonas syringae pv. phaseolicola (strain 1448A / Race 6)) protein is Peptide chain release factor 3.